The sequence spans 537 residues: MADTIHWADVIAEDVLKKSGKHLVATGITPSGNIHIGNMREVVTADAVYRALSNKGANADFIYIADNYDPLRKVYPFLPESYVEHVGKPISEIPCPCGNCANYAEHFLKPFLEALRRLGINPQVYRADEMYKTGKYTEAIKTALVKRDAIAKILEEVSGKTVAADWSPFNPRCNQCGKITTTKVTGFDLEAETVDYVCACGHSGIVPMAGGGKLTWRVDWPARWSVLGVTVEPFGKDHASKGGSYDTGKRIVREIFGHEPPYPIVYEWIMLGKQGAMSSSTGVVISISDMLEIIPPEVLRYLIIRTKPEKHIQFDPGQPLLTLVDEYERLRTQFRENDPSLGTFQKRVYELSRATGICQSEIPFKQMVTIYQVARGDFAQILKIVKRSGFSTEDKKCIKELADNVSKWLKLYAPPFAKFKVKEKVPVQAATLSELQRAFLSAFAALIESRGEISGEEYHMLVYSAKDEGSELNRKIAEKLNTHAPQVDPRELFKAIYFSLLGQKSGPKAGWFLSSFDKEFLVERFEEASNYSPEKQA.

The 'HIGH' region motif lies at 30–38; sequence PSGNIHIGN. A 'KMSKS' region motif is present at residues 276 to 280; it reads AMSSS.

The protein belongs to the class-I aminoacyl-tRNA synthetase family.

It localises to the cytoplasm. It catalyses the reaction tRNA(Lys) + L-lysine + ATP = L-lysyl-tRNA(Lys) + AMP + diphosphate. This is Lysine--tRNA ligase from Methanosarcina barkeri (strain Fusaro / DSM 804).